The primary structure comprises 866 residues: Leucine--tRNA ligase (866 aa).

A 'HIGH' region motif is present at residues 59–69; it reads PYPSGDLHMGH. The disordered stretch occupies residues 393–421; that stretch reads VPVIKTDPQTGEPLLPESAPLESPAETGQ. The segment covering 404 to 418 has biased composition (low complexity); the sequence is EPLLPESAPLESPAE. The short motif at 628 to 632 is the 'KMSKS' region element; sequence AMSKS. Lysine 631 provides a ligand contact to ATP.

This sequence belongs to the class-I aminoacyl-tRNA synthetase family.

Its subcellular location is the cytoplasm. The enzyme catalyses tRNA(Leu) + L-leucine + ATP = L-leucyl-tRNA(Leu) + AMP + diphosphate. The sequence is that of Leucine--tRNA ligase from Leifsonia xyli subsp. xyli (strain CTCB07).